The sequence spans 66 residues: Large ribosomal subunit protein bL35 (66 aa).

It belongs to the bacterial ribosomal protein bL35 family.

The protein is Large ribosomal subunit protein bL35 of Acholeplasma laidlawii (strain PG-8A).